Here is an 89-residue protein sequence, read N- to C-terminus: Dynein light chain 1, cytoplasmic (89 aa).

The residue at position 36 (Lys-36) is an N6-acetyllysine. Lys-43 participates in a covalent cross-link: Glycyl lysine isopeptide (Lys-Gly) (interchain with G-Cter in SUMO2). The interaction with ESR1 stretch occupies residues Thr-67 to Gly-89. Ser-88 is modified (phosphoserine).

It belongs to the dynein light chain family. As to quaternary structure, homodimer. Monomer; the monomeric form is incapable of binding to target proteins. The cytoplasmic dynein 1 complex consists of two catalytic heavy chains (HCs) and a number of non-catalytic subunits presented by intermediate chains (ICs), light intermediate chains (LICs) and light chains (LCs); the composition seems to vary in respect to the IC, LIC and LC composition. The heavy chain homodimer serves as a scaffold for the probable homodimeric assembly of the respective non-catalytic subunits. The ICs and LICs bind directly to the HC dimer and the LCs assemble on the IC dimer. Interacts with TXNDC17. Interacts with WWC1 and ESR1. The WWC1-DYNLL1 interaction is mandatory for the recruitment and transactivation functions of ESR1 or DYNLL1 to the target chromatin. Interacts with BCL2L11. Interacts with BCL2; the interaction is greatly enhanced in the nucleus and in mitochondria upon induction of apoptosis. Interacts with PAK1; the interaction requires dimeric DYNLL1. Interacts with MYZAP. Part of an astrin (SPAG5)-kinastrin (SKAP) complex containing KNSTRN, SPAG5, PLK1, DYNLL1 and SGO2. Interacts with ATMIN; this interaction inhibits ATMIN transcriptional activity and hence may play a role in a feedback loop whereby DYNLL1 inhibits transactivation of its own promoter by ATMIN. Interacts with NEK9 (not phosphorylated at 'Ser-944'). Interacts with BICD2. Interacts with BCAS1. Interacts with Basson/BSN. Interacts with HDAC6. Interacts with TPPP. Interacts with AMBRA1 (via TQT motifs); tethering AMBRA1 to the cytoskeleton. Interacts with FAM83D/CHICA (via C-terminus). Interacts with HMMR, SPAG5/Astrin and KNSTRN/Kinastrin. Interacts with TLK2. Interacts with NOS1. Interacts with WWC1, WWC2 and WWC3. Interacts with MRE11; inhibiting MRE11 homodimerization and activity. In terms of assembly, (Microbial infection) Interacts with bovine immunodeficiency virus Gag protein; this interaction is critical for intracellular microtubule-dependent viral genome transport. In terms of processing, phosphorylation at Ser-88 promotes recruitment to DNA double-strand breaks (DSBs) by TP53BP1 and ability to inhibit MRE11.

The protein resides in the cytoplasm. It is found in the cytoskeleton. Its subcellular location is the microtubule organizing center. The protein localises to the centrosome. It localises to the chromosome. The protein resides in the nucleus. It is found in the mitochondrion. Acts as one of several non-catalytic accessory components of the cytoplasmic dynein 1 complex that are thought to be involved in linking dynein to cargos and to adapter proteins that regulate dynein function. Cytoplasmic dynein 1 acts as a motor for the intracellular retrograde motility of vesicles and organelles along microtubules. May play a role in changing or maintaining the spatial distribution of cytoskeletal structures. In addition to its role in cytoskeleton and transport, acts as a protein-protein adapter, which inhibits and/or sequesters target proteins. Involved in the response to DNA damage by acting as a key regulator of DNA end resection: when phosphorylated at Ser-88, recruited to DNA double-strand breaks (DSBs) by TP53BP1 and acts by disrupting MRE11 dimerization, thereby inhibiting DNA end resection. In a subset of DSBs, DYNLL1 remains unphosphorylated and promotes the recruitment of the Shieldin complex. Binds and inhibits the catalytic activity of neuronal nitric oxide synthase/NOS1. Promotes transactivation functions of ESR1 and plays a role in the nuclear localization of ESR1. Regulates apoptotic activities of BCL2L11 by sequestering it to microtubules. Upon apoptotic stimuli the BCL2L11-DYNLL1 complex dissociates from cytoplasmic dynein and translocates to mitochondria and sequesters BCL2 thus neutralizing its antiapoptotic activity. This chain is Dynein light chain 1, cytoplasmic (DYNLL1), found in Bos taurus (Bovine).